Reading from the N-terminus, the 336-residue chain is Phenylalanine--tRNA ligase alpha subunit (336 aa).

Residue Glu257 coordinates Mg(2+).

It belongs to the class-II aminoacyl-tRNA synthetase family. Phe-tRNA synthetase alpha subunit type 1 subfamily. In terms of assembly, tetramer of two alpha and two beta subunits. The cofactor is Mg(2+).

Its subcellular location is the cytoplasm. The enzyme catalyses tRNA(Phe) + L-phenylalanine + ATP = L-phenylalanyl-tRNA(Phe) + AMP + diphosphate + H(+). The chain is Phenylalanine--tRNA ligase alpha subunit from Xanthomonas campestris pv. campestris (strain 8004).